The chain runs to 307 residues: Probable inactive peptidyl-prolyl cis-trans isomerase-like 6 (307 aa).

Residues 141–304 (FLDISIDLYP…QNCVITASGQ (164 aa)) enclose the PPIase cyclophilin-type domain.

It belongs to the cyclophilin-type PPIase family.

In terms of biological role, probable inactive PPIase with no peptidyl-prolyl cis-trans isomerase activity. In Bos taurus (Bovine), this protein is Probable inactive peptidyl-prolyl cis-trans isomerase-like 6.